Consider the following 202-residue polypeptide: dITP/XTP pyrophosphatase (202 aa).

9 to 14 (TGNKGK) is a binding site for substrate. Catalysis depends on Asp-73, which acts as the Proton acceptor. Mg(2+) is bound at residue Asp-73. Residues Ser-74, 158-161 (FGYD), Lys-181, and 186-187 (HR) contribute to the substrate site.

This sequence belongs to the HAM1 NTPase family. Homodimer. Requires Mg(2+) as cofactor.

It catalyses the reaction XTP + H2O = XMP + diphosphate + H(+). The catalysed reaction is dITP + H2O = dIMP + diphosphate + H(+). It carries out the reaction ITP + H2O = IMP + diphosphate + H(+). Its function is as follows. Pyrophosphatase that catalyzes the hydrolysis of nucleoside triphosphates to their monophosphate derivatives, with a high preference for the non-canonical purine nucleotides XTP (xanthosine triphosphate), dITP (deoxyinosine triphosphate) and ITP. Seems to function as a house-cleaning enzyme that removes non-canonical purine nucleotides from the nucleotide pool, thus preventing their incorporation into DNA/RNA and avoiding chromosomal lesions. In Lactobacillus acidophilus (strain ATCC 700396 / NCK56 / N2 / NCFM), this protein is dITP/XTP pyrophosphatase.